A 527-amino-acid polypeptide reads, in one-letter code: Aspartokinase (527 aa).

Residue threonine 333 is modified to Phosphothreonine. The region spanning 442-527 is the ACT domain; sequence LVGKHMKQYI…RLEQLKRLGI (86 aa).

It belongs to the aspartokinase family. As to quaternary structure, homohexamer. Interacts with FPR1; the interaction is direct, plays a role in feedback inhibition of aspartokinase by threonine, and inhibited by tacrolimus and sirolimus.

The catalysed reaction is L-aspartate + ATP = 4-phospho-L-aspartate + ADP. Its pathway is amino-acid biosynthesis; L-methionine biosynthesis via de novo pathway; L-homoserine from L-aspartate: step 1/3. The protein operates within amino-acid biosynthesis; L-threonine biosynthesis; L-threonine from L-aspartate: step 1/5. Allosterically inhibited by threonine. Its function is as follows. Phosphorylates aspartate, the first step in the biosynthesis of amino acids that derive from aspartate (the aspartate family of amino acids), including methioinine and threonine, the latter of which is a precursor to isoleucine. The polypeptide is Aspartokinase (HOM3) (Saccharomyces cerevisiae (strain ATCC 204508 / S288c) (Baker's yeast)).